A 908-amino-acid chain; its full sequence is Disease resistance protein RPP8 (908 aa).

Residues 15–57 are a coiled coil; that stretch reads DLLSRESERLQGIDGQLDGLKRQLRSLQSLLKDADAKKHGSDR. An NB-ARC domain is found at 146–459; the sequence is RQRVQREIRQ…AEGIYDGSTI (314 aa). 192 to 199 contacts ATP; sequence GMGGIGKT. 9 LRR repeats span residues 575–600, 601–623, 648–673, 693–718, 722–746, 748–770, 793–820, 842–867, and 882–905; these read LTLL…IGGL, IHLR…MRNL, MIQL…DLVN, MTKL…SLRE, LETL…VLDH, IHLK…QFPP, LLHL…GFPQ, MPCL…KYIT, and KEKL…QFIN.

It belongs to the disease resistance NB-LRR family. RPP8/HRT subfamily. In terms of assembly, interacts with the NAC protein TIP. Interacts with MORC1/CRT1. Interacts with COP1 and is subsequently degraded in a 26s proteasome dependent manner. In terms of tissue distribution, mostly expressed in leaves, and, to a lower extent, in roots.

The protein localises to the cell membrane. In terms of biological role, disease resistance protein. Resistance proteins guard the plant against pathogens that contain an appropriate avirulence protein via an indirect interaction with this avirulence protein. That triggers a defense system including the hypersensitive response, which restricts the pathogen growth. The interaction with TIP (TCV-interacting protein) may be essential for the recognition of the avirulence proteins, and the triggering of the defense response. Triggers resistance to turnip crinkle virus (TCV) via a SAG101-dependent pathway. The chain is Disease resistance protein RPP8 (RPP8) from Arabidopsis thaliana (Mouse-ear cress).